The following is a 151-amino-acid chain: UPF0208 membrane protein YE1335 (151 aa).

The next 2 helical transmembrane spans lie at 46-66 (FGIR…IALG) and 69-89 (LGPA…GLWW).

The protein belongs to the UPF0208 family.

It localises to the cell inner membrane. This chain is UPF0208 membrane protein YE1335, found in Yersinia enterocolitica serotype O:8 / biotype 1B (strain NCTC 13174 / 8081).